The primary structure comprises 959 residues: Bifunctional premutilin synthase (959 aa).

The class II diterpene cyclase stretch occupies residues 1-542; that stretch reads MGLSEDLHAR…ALNVPIPRFD (542 aa). A DXDD motif motif is present at residues 309–312; it reads DADM. D311 functions as the For class II diterpene cyclase activity in the catalytic mechanism. Positions 543-959 are class I diterpene synthase; sequence PSSISTLPAI…TANGSNGIHH (417 aa). Catalysis depends on D649, which acts as the For class I diterpene synthase activity. Residues D649, D653, and N824 each coordinate Mg(2+). A DDXXD motif motif is present at residues 649–653; it reads DDYLD. The segment at 931–959 is disordered; it reads KGTNGVKKINGSSTNGTKVTANGSNGIHH. Residues 940 to 959 are compositionally biased toward polar residues; it reads NGSSTNGTKVTANGSNGIHH.

It belongs to the terpene synthase family. It depends on Mg(2+) as a cofactor.

It participates in secondary metabolite biosynthesis; terpenoid biosynthesis. Functionally, bifunctional premutilin synthase; part of the gene cluster that mediates the biosynthesis of pleuromutilin, a tricyclic diterpene showing antibacterial properties. The geranylgeranyl diphosphate (GGPP) synthase catalyzes the first step in pleuromutilin biosynthesis. GGPP is then substrate of the premutilin synthase (PS) to yield premutilin. Premutilin synthase is a bifunctional enzyme composed of the fusion of a class II diterpene cyclase (DTC) and a class I diterpene synthase (DTS), with the corresponding domains and active sites containing characteristic aspartate-rich motifs. GGPP is first converted to mutildienyl-diphosphate (MPP) at the class II DTC site. MPP is subsequently further cyclized at the class I DTS site, followed by a 1,5-hydride shift and addition of water prior to terminating deprotonation, to yield premutilin. In addition to the aforementioned GGPP synthase and bifunctional diterpene synthase, the cluster also contains three cytochrome P450 monooxygenases, a short-chain alcohol dehydrogenase, and an acyltransferase, involved in the conversion of premutilin to pleuromutilin. The cytochrome P450 monooxygenases P450-1 and P450-2 hydroxylate premutilin at C-11 and C-3, respectively, producing 11-hydroxypremutilin and 3-hydroxypremutilin. The combination of the actions of both ple5 and ple6 leads to the production of 3,11-dihydroxypremutilin. The short chain dehydrogenase SDR further converts 3,11-dihydroxypremutilin into mutilin. The acetyltransferase ATF then acetylates mutilin to produce 14-O-acetylmutilin. Finally, the cytochrome P450 monooxygenase P450-3 catalyzes hydroxylation on the alpha position of the acetyl side chain of 14-O-acetylmutilin to yield pleuromutilin. The protein is Bifunctional premutilin synthase of Clitopilus passeckerianus (Pleurotus passeckerianus).